The primary structure comprises 1483 residues: Neuropathy target esterase sws (1483 aa).

Residues 1 to 34 (MDVLELLRASANGCYNTLFSDAWFQYVSKQIATT) lie on the Lumenal side of the membrane. The chain crosses the membrane as a helical span at residues 35 to 55 (MYWYGALLVIGVLFIAWFLYF). Residues 56–1483 (KRLARLRLRD…ENLTKTDTKN (1428 aa)) are Cytoplasmic-facing. 174 to 301 (IFGHFEKPIF…IRVIQVIMIR (128 aa)) serves as a coordination point for a nucleoside 3',5'-cyclic phosphate. Disordered stretches follow at residues 348–380 (ASRPVVRAPTSPNSRLSREEHTLSDPDPNPNAN) and 404–440 (SSAVSVNQAGTRRSSTTYGPSGESPNGNANTAPGTSI). The segment covering 413-440 (GTRRSSTTYGPSGESPNGNANTAPGTSI) has biased composition (polar residues). A phosphoserine mark is found at Ser418 and Ser424. A nucleoside 3',5'-cyclic phosphate-binding positions include 456–585 (ELGL…VVRR) and 574–701 (IVLD…LSHR). The PNPLA domain maps to 927-1093 (LVLGGGGARG…VNNLPGHLWR (167 aa)). The GXGXXG motif lies at 931-936 (GGGARG). The GXSXG signature appears at 958 to 962 (GVSIG). The active-site Nucleophile is Ser960. The active-site Proton acceptor is Asp1080. The short motif at 1080-1082 (DGG) is the DGA/G element. Position 1174 is a phosphoserine (Ser1174). Residues 1349–1483 (DKATQSTPPT…ENLTKTDTKN (135 aa)) are disordered. Polar residues predominate over residues 1351–1373 (ATQSTPPTPNKQHALSPTSSQTN). A compositionally biased stretch (basic and acidic residues) spans 1382–1396 (KPKEKQPSYDKLDRE). Over residues 1410–1419 (ERSSMQQRDS) the composition is skewed to low complexity. Positions 1445 to 1458 (LNKPEQQPEQKPVP) are enriched in basic and acidic residues. Residues 1465–1474 (QKQQDQQQQE) show a composition bias toward low complexity.

This sequence belongs to the NTE family. Interacts with Pka-C3; interaction inhibits the catalytic function of Pka-C3 and the esterase activity of sws.

The protein resides in the endoplasmic reticulum membrane. The catalysed reaction is a 1-acyl-sn-glycero-3-phosphocholine + H2O = sn-glycerol 3-phosphocholine + a fatty acid + H(+). Functionally, phospholipase B that deacylates intracellular phosphatidylcholine (PtdCho), generating glycerophosphocholine (GroPtdCho). This deacylation occurs at both sn-2 and sn-1 positions of PtdCho. Its specific chemical modification by certain organophosphorus (OP) compounds leads to distal axonopathy. Plays a role in the signaling mechanism between neurons and glia that regulates glia wrapping during development of the adult brain. Essential for membrane lipid homeostasis and cell survival in both neurons and glia of the adult brain. The polypeptide is Neuropathy target esterase sws (Drosophila virilis (Fruit fly)).